We begin with the raw amino-acid sequence, 179 residues long: UPF0227 protein Swoo_1808 (179 aa).

It belongs to the UPF0227 family.

This is UPF0227 protein Swoo_1808 from Shewanella woodyi (strain ATCC 51908 / MS32).